The following is a 171-amino-acid chain: uncharacterized protein (171 aa).

Belongs to the HHV-5 UL128 protein family. Forms the envelope pentamer complex (PC) composed of gH, gL, UL128, UL130, and UL131A. The pentamer interacts with host NRP2.

It localises to the virion membrane. In terms of biological role, plays a role in viral entry into host cells. Forms a pentameric complex at the surface of the viral envelope together with gH, gL, UL130 and UL131. This complex is required for entry in epithelial, endothelial and myeloid host cells. Mechanistically, engages host receptor(s) including neurophilin 2/NRP2 to mediate infection. Additionally, monomeric UL128 may interfere with certain inflammatory cytokines to increase infection and dissemination by blocking monocytes migration. This is an uncharacterized protein from Human cytomegalovirus (strain AD169) (HHV-5).